The primary structure comprises 102 residues: Small ribosomal subunit protein uS10 (102 aa).

Belongs to the universal ribosomal protein uS10 family. Part of the 30S ribosomal subunit.

Functionally, involved in the binding of tRNA to the ribosomes. The protein is Small ribosomal subunit protein uS10 of Coprothermobacter proteolyticus (strain ATCC 35245 / DSM 5265 / OCM 4 / BT).